The following is a 171-amino-acid chain: 3-hydroxydecanoyl-[acyl-carrier-protein] dehydratase (171 aa).

Residue H70 is part of the active site.

Belongs to the thioester dehydratase family. FabA subfamily. In terms of assembly, homodimer.

The protein localises to the cytoplasm. It catalyses the reaction a (3R)-hydroxyacyl-[ACP] = a (2E)-enoyl-[ACP] + H2O. It carries out the reaction (3R)-hydroxydecanoyl-[ACP] = (2E)-decenoyl-[ACP] + H2O. The enzyme catalyses (2E)-decenoyl-[ACP] = (3Z)-decenoyl-[ACP]. Its pathway is lipid metabolism; fatty acid biosynthesis. Functionally, necessary for the introduction of cis unsaturation into fatty acids. Catalyzes the dehydration of (3R)-3-hydroxydecanoyl-ACP to E-(2)-decenoyl-ACP and then its isomerization to Z-(3)-decenoyl-ACP. Can catalyze the dehydratase reaction for beta-hydroxyacyl-ACPs with saturated chain lengths up to 16:0, being most active on intermediate chain length. This is 3-hydroxydecanoyl-[acyl-carrier-protein] dehydratase from Vibrio campbellii (strain ATCC BAA-1116).